We begin with the raw amino-acid sequence, 208 residues long: Guanylate kinase (208 aa).

The region spanning 5–184 (GLLIVFSGPS…AAERVKCVIE (180 aa)) is the Guanylate kinase-like domain. Residue 12 to 19 (GPSGVGKG) participates in ATP binding.

The protein belongs to the guanylate kinase family.

Its subcellular location is the cytoplasm. It catalyses the reaction GMP + ATP = GDP + ADP. Functionally, essential for recycling GMP and indirectly, cGMP. The protein is Guanylate kinase of Streptococcus pneumoniae serotype 4 (strain ATCC BAA-334 / TIGR4).